The following is a 255-amino-acid chain: ATP synthase subunit a (255 aa).

A run of 6 helical transmembrane segments spans residues 28–48 (VDSL…FWLG), 86–106 (IAPL…MDLV), 125–145 (ILPT…FFLI), 164–184 (FHPF…IELI), 203–223 (LIFI…GTPW), and 224–244 (AIFH…LTVV).

It belongs to the ATPase A chain family. As to quaternary structure, F-type ATPases have 2 components, CF(1) - the catalytic core - and CF(0) - the membrane proton channel. CF(1) has five subunits: alpha(3), beta(3), gamma(1), delta(1), epsilon(1). CF(0) has three main subunits: a(1), b(2) and c(9-12). The alpha and beta chains form an alternating ring which encloses part of the gamma chain. CF(1) is attached to CF(0) by a central stalk formed by the gamma and epsilon chains, while a peripheral stalk is formed by the delta and b chains.

It localises to the cell inner membrane. Key component of the proton channel; it plays a direct role in the translocation of protons across the membrane. In Alkalilimnicola ehrlichii (strain ATCC BAA-1101 / DSM 17681 / MLHE-1), this protein is ATP synthase subunit a.